A 229-amino-acid chain; its full sequence is MKQVRLLPSAPVRAVCALAVAALAGCAQIPRDPIIQQPMTAQPPMPMSMQAPGSIYNPGYAGRPLFEDQRPRNVGDILTIMIAENINATKSSGANTNRQGNTDFSVPTAGFLGGLFAKANMSAAGANKFAATGGASAANTFNGTITVTVTNVLPNGNLVVSGEKQMLINQGNEFVRFSGVVNPNTISGANSVYSTQVADAKIEYSSKGYINEAETMGWLQRFFLNLAPW.

Residues 1–25 (MKQVRLLPSAPVRAVCALAVAALAG) form the signal peptide. The N-palmitoyl cysteine moiety is linked to residue Cys26. The S-diacylglycerol cysteine moiety is linked to residue Cys26.

It belongs to the FlgH family. As to quaternary structure, the basal body constitutes a major portion of the flagellar organelle and consists of four rings (L,P,S, and M) mounted on a central rod.

The protein resides in the cell outer membrane. It is found in the bacterial flagellum basal body. Assembles around the rod to form the L-ring and probably protects the motor/basal body from shearing forces during rotation. The polypeptide is Flagellar L-ring protein (Burkholderia ambifaria (strain MC40-6)).